Here is a 629-residue protein sequence, read N- to C-terminus: MASESTNGKQARSHVTKGRRQYQHQHQQQQQQQQQVRSRSSVSECDGDDSFIFEANEAWKDFHGSLLGFYENGELCDVTLKVGSKLISCHKLVLACVIPYFRAMFLSEMSEAKQALIEIRDFDGDAVEDLVKFVYSSRLTLTVDNVQPLLYAACILQVELVARACCEYMQLHFHPSNCLAVRAFAESHNRIDLMDMADQYACEHFTEVVECEDFVSVSPQHLHKLLSSSDLNIDSEKQVYSAAIKWLLANPQHHPKWLDETLAQVRLPLLPVDFLMGVVAKEQIVKQNLKCRDLLDEARNYHLHLSSKPVPDFEYTVRTTPRKHTAGVLFCVGGRGGSGDPFRSIECYSINKNSWFFGPEMNSRRRHVGVISVEGKVYAVGGHDGNEHLGSMEMFDPLTNKWMMKASMNTKRRGIALASLGGPIYAIGGLDDNTCFSDVERYDIESDQWSTVAPMNTPRGGVGSVALINHVYAVGGNDGVASLSSVERYHPHLDKWIEVKEMGQRRAGNGVSELHGCLYVVGGFDDNSPLSSVERYDPRSNKWDYVAALTTPRGGVGIATVMGKIFAVGGHNGNAYLNTVEAFDPVLNKWELVGPVSHCRAGAGVAVCDCLTSQIRDVGHGSTNVVDCM.

Residues 1 to 10 are compositionally biased toward polar residues; sequence MASESTNGKQ. The interval 1-40 is disordered; that stretch reads MASESTNGKQARSHVTKGRRQYQHQHQQQQQQQQQVRSRS. An N-acetylalanine modification is found at alanine 2. The segment covering 11–23 has biased composition (basic residues); that stretch reads ARSHVTKGRRQYQ. Positions 24-35 are enriched in low complexity; it reads HQHQQQQQQQQQ. Positions 76 to 143 constitute a BTB domain; sequence CDVTLKVGSK…VYSSRLTLTV (68 aa). One can recognise a BACK domain in the interval 178–279; it reads CLAVRAFAES…LPVDFLMGVV (102 aa). 6 Kelch repeats span residues 328–375, 376–422, 424–469, 471–516, 517–563, and 565–610; these read VLFC…SVEG, KVYA…SLGG, IYAI…ALIN, VYAV…ELHG, CLYV…TVMG, and IFAV…VCDC.

Component of the BCR(KLHL8) E3 ubiquitin ligase complex, at least composed of CUL3, KLHL8 and RBX1. Interacts with RAPSN.

It functions in the pathway protein modification; protein ubiquitination. Functionally, substrate-specific adapter of a BCR (BTB-CUL3-RBX1) E3 ubiquitin ligase complex required for The BCR(KLHL8) ubiquitin ligase complex mediates ubiquitination and degradation of RAPSN. This Mus musculus (Mouse) protein is Kelch-like protein 8 (Klhl8).